The primary structure comprises 240 residues: Peptidyl-tRNA hydrolase 2 (240 aa).

Tyr-60 provides a ligand contact to tRNA. The Proton acceptor role is filled by His-65. TRNA-binding residues include Tyr-111, Asn-113, and Asn-159.

The protein belongs to the PTH family. In terms of assembly, monomer.

It localises to the cytoplasm. It catalyses the reaction an N-acyl-L-alpha-aminoacyl-tRNA + H2O = an N-acyl-L-amino acid + a tRNA + H(+). In terms of biological role, hydrolyzes ribosome-free peptidyl-tRNAs (with 1 or more amino acids incorporated), which drop off the ribosome during protein synthesis, or as a result of ribosome stalling. Its function is as follows. Catalyzes the release of premature peptidyl moieties from peptidyl-tRNA molecules trapped in stalled 50S ribosomal subunits, and thus maintains levels of free tRNAs and 50S ribosomes. The protein is Peptidyl-tRNA hydrolase 2 of Corynebacterium jeikeium (strain K411).